The primary structure comprises 442 residues: 3-phosphoshikimate 1-carboxyvinyltransferase (442 aa).

K25, S26, and R30 together coordinate 3-phosphoshikimate. Phosphoenolpyruvate is bound at residue K25. Phosphoenolpyruvate-binding residues include G97 and R125. Positions 170, 171, 172, 323, and 350 each coordinate 3-phosphoshikimate. Q172 is a binding site for phosphoenolpyruvate. D323 (proton acceptor) is an active-site residue. Residues R354 and R399 each contribute to the phosphoenolpyruvate site.

Belongs to the EPSP synthase family. In terms of assembly, monomer.

It localises to the cytoplasm. The enzyme catalyses 3-phosphoshikimate + phosphoenolpyruvate = 5-O-(1-carboxyvinyl)-3-phosphoshikimate + phosphate. It participates in metabolic intermediate biosynthesis; chorismate biosynthesis; chorismate from D-erythrose 4-phosphate and phosphoenolpyruvate: step 6/7. Its function is as follows. Catalyzes the transfer of the enolpyruvyl moiety of phosphoenolpyruvate (PEP) to the 5-hydroxyl of shikimate-3-phosphate (S3P) to produce enolpyruvyl shikimate-3-phosphate and inorganic phosphate. The polypeptide is 3-phosphoshikimate 1-carboxyvinyltransferase (Bartonella tribocorum (strain CIP 105476 / IBS 506)).